We begin with the raw amino-acid sequence, 455 residues long: Peroxisomal membrane protein PEX3 (455 aa).

Residues 113–125 are compositionally biased toward polar residues; the sequence is TVLSDDFSTSQEG. The tract at residues 113–135 is disordered; that stretch reads TVLSDDFSTSQEGAISEDTNKPP. Residues 155 to 171 traverse the membrane as a helical segment; the sequence is FLTLIYCESLLIVFLHL.

The protein belongs to the peroxin-3 family. Component of the peroxisomal docking complex, composed of at least PEX3, PEX13, PEX14 and PEX17. Component of the peroxisomal translocation complex, composed of at least PEX3, PEX2, PEX10 and PEX12. Interacts with PEX19. Interacts with the pexophagy receptor ATG30.

The protein resides in the peroxisome membrane. Peroxisomal membrane protein required for peroxisome biosynthesis. Shared component of both the peroxisomal docking complex and the peroxisomal translocation complex. The two types of peroxisomal matrix targeting signals, PTS1 and PTS2, are first recognized in the cytosol by their receptors PEX5 and PEX7, respectively, which then carry the cargo to the peroxisomal membrane. The peroxisomal targeting signal (PTS) receptor-cargo complexes interact with peroxisomal membrane protein (PMP) components of the docking complex. They have then additional downstream interactions with the translocation complex, leading to the transport of fully folded and oligomerized cargo into the peroxisome matrix. PEX3 acts as an anchoring site for PEX19 on the peroxisomal membrane and thus plays a crucial role in the assembly of the peroxisomal translocation complex. Is also essential for the interaction between the two complexes. Finally. PEX3 activates selective autophagy of peroxisomes (pexophagy) via interaction with the pexophagy receptor ATG30. The protein is Peroxisomal membrane protein PEX3 of Komagataella phaffii (strain GS115 / ATCC 20864) (Yeast).